Here is a 194-residue protein sequence, read N- to C-terminus: Putative 3-methyladenine DNA glycosylase (194 aa).

It belongs to the DNA glycosylase MPG family.

This chain is Putative 3-methyladenine DNA glycosylase, found in Synechococcus elongatus (strain ATCC 33912 / PCC 7942 / FACHB-805) (Anacystis nidulans R2).